A 167-amino-acid polypeptide reads, in one-letter code: Ubiquitin-fold modifier-conjugating enzyme 1 (167 aa).

Cys116 acts as the Glycyl thioester intermediate in catalysis.

It belongs to the ubiquitin-conjugating enzyme family. UFC1 subfamily.

Its function is as follows. E2-like enzyme which forms an intermediate with UFM1 via a thioester linkage. This is Ubiquitin-fold modifier-conjugating enzyme 1 from Anopheles gambiae (African malaria mosquito).